We begin with the raw amino-acid sequence, 465 residues long: Methionine aminopeptidase 2-2 (465 aa).

Residues 1–13 (MGSKTPNDHRRGP) show a composition bias toward basic and acidic residues. Residues 1 to 92 (MGSKTPNDHR…KKKTLLGGLQ (92 aa)) are disordered. A compositionally biased stretch (acidic residues) spans 44 to 55 (GETEDGEDEDDD). Residues 71 to 86 (TKKKNKRKKNKKKKKT) show a composition bias toward basic residues. H217 contacts substrate. Residues D238, D249, and H318 each coordinate a divalent metal cation. H326 is a binding site for substrate. E351 and E446 together coordinate a divalent metal cation.

This sequence belongs to the peptidase M24A family. Methionine aminopeptidase eukaryotic type 2 subfamily. Requires Co(2+) as cofactor. The cofactor is Zn(2+). It depends on Mn(2+) as a cofactor. Fe(2+) is required as a cofactor.

The protein localises to the cytoplasm. The catalysed reaction is Release of N-terminal amino acids, preferentially methionine, from peptides and arylamides.. In terms of biological role, cotranslationally removes the N-terminal methionine from nascent proteins. The N-terminal methionine is often cleaved when the second residue in the primary sequence is small and uncharged (Met-Ala-, Cys, Gly, Pro, Ser, Thr, or Val). This chain is Methionine aminopeptidase 2-2, found in Blastomyces gilchristii (strain SLH14081) (Blastomyces dermatitidis).